We begin with the raw amino-acid sequence, 400 residues long: MSQNLILILNCGSSSLKFAILDPINGDEKLSGLAESFYLDDARIKWKFNGEKGNADLDAGAAHTEALNFIVSNILTDELKQSIGAIGHRIVHGGEKFTSSVVITDEVVKGIEEVIQFAPLHNPAHLIGIQEAFRIFPELKDRNVAVFDTAFHTTMPEQAYLYALPYSLYKDHGVRRYGAHGTSHYFVSREAARRLNVAEDKVNVITCHLGNGGSVSAIRHGECIDTSMGLTPLEGLVMGTRSGDIDPAIIFYMHDTLGMSVEEINNTLTKKSGLLGLTEVTSDCRYAEDNYETDDAARRAMEVYCYRLAKYIGSYMAVIGERLDAIVFTGGIGENSAHVREITLNHLKLFGYQVDDARNLAARFGNEGVITAEGSPLAMVIATNEELVIAQDTARLTITK.

N10 serves as a coordination point for Mg(2+). K17 is a binding site for ATP. Residue R89 participates in substrate binding. Catalysis depends on D148, which acts as the Proton donor/acceptor. Residues 208–212 (HLGNG), 283–285 (DCR), and 331–335 (GIGEN) contribute to the ATP site. E385 contacts Mg(2+).

Belongs to the acetokinase family. As to quaternary structure, homodimer. Mg(2+) serves as cofactor. The cofactor is Mn(2+).

It localises to the cytoplasm. The catalysed reaction is acetate + ATP = acetyl phosphate + ADP. Its pathway is metabolic intermediate biosynthesis; acetyl-CoA biosynthesis; acetyl-CoA from acetate: step 1/2. In terms of biological role, catalyzes the formation of acetyl phosphate from acetate and ATP. Can also catalyze the reverse reaction. The sequence is that of Acetate kinase from Haemophilus ducreyi (strain 35000HP / ATCC 700724).